The chain runs to 433 residues: Steroid C26-monooxygenase (433 aa).

G202 serves as a coordination point for substrate. A heme-binding site is contributed by C377.

Belongs to the cytochrome P450 family. It depends on heme as a cofactor.

It carries out the reaction cholest-4-en-3-one + 6 reduced [2Fe-2S]-[ferredoxin] + 3 O2 + 5 H(+) = (25S)-3-oxocholest-4-en-26-oate + 6 oxidized [2Fe-2S]-[ferredoxin] + 4 H2O. It participates in steroid metabolism; cholesterol degradation. Functionally, involved in the utilization of cholesterol as the sole carbon and energy source by degrading the side chain during infection. Primarily catalyzes the sequential oxidation of the terminal methyl of cholest-4-en-3-one into (25S)-26-hydroxycholest-4-en-3-one (alcohol), (25S)-26-oxocholest-4-en-3-one (aldehyde), to finally yield the carboxylic acid (25S)-3-oxocholest-4-en-26-oate. Also able to sequentially oxidize cholesterol itself, not only cholest-4-en-3-one. This chain is Steroid C26-monooxygenase (cyp125), found in Mycobacterium bovis (strain ATCC BAA-935 / AF2122/97).